Reading from the N-terminus, the 158-residue chain is Transcription elongation factor GreA (158 aa).

Residues Gln-49–Gln-73 adopt a coiled-coil conformation.

The protein belongs to the GreA/GreB family.

Necessary for efficient RNA polymerase transcription elongation past template-encoded arresting sites. The arresting sites in DNA have the property of trapping a certain fraction of elongating RNA polymerases that pass through, resulting in locked ternary complexes. Cleavage of the nascent transcript by cleavage factors such as GreA or GreB allows the resumption of elongation from the new 3'terminus. GreA releases sequences of 2 to 3 nucleotides. This chain is Transcription elongation factor GreA, found in Methylococcus capsulatus (strain ATCC 33009 / NCIMB 11132 / Bath).